A 391-amino-acid polypeptide reads, in one-letter code: Probable sugar efflux transporter (391 aa).

The next 12 membrane-spanning stretches (helical) occupy residues 16–36, 51–71, 82–102, 110–130, 138–158, 170–190, 210–230, 247–267, 277–297, 300–320, 338–358, and 361–381; these read VFVF…PVAL, VGLM…PLML, LLFL…AWNF, MGIA…VIRV, QALG…LPLG, TFGV…KLLP, PLLM…FTTY, ITTL…FLFS, FIAF…VFKN, WVIF…TIAL, IFSG…SIVI, and LGLE…LFWL.

The protein belongs to the major facilitator superfamily. SotB (TC 2.A.1.2) family.

Its subcellular location is the cell inner membrane. Functionally, involved in the efflux of sugars. The physiological role may be the reduction of the intracellular concentration of toxic sugars or sugar metabolites. The protein is Probable sugar efflux transporter of Helicobacter pylori (strain HPAG1).